The sequence spans 187 residues: MIILLTGMPGSGKGEVAKAFKKLGIPVVSMGDAIREEAEKRGIPKTPEGLKYVSLKVREELGPGAVAILIAPKLKNLLKKHKTVVVEGVRSPKEVEEFRKLFPNEEIKVLAIHSPPGARYERMRKRGRSDDPKTWEEFLDRDKKELNFGIGEVIALADYMIVNDDSFQKFKRDIEVIIRKILYFNHQ.

An ATP-binding site is contributed by 7-14 (GMPGSGKG).

This sequence belongs to the UPF0200 family.

The polypeptide is UPF0200 protein PYRAB09750 (Pyrococcus abyssi (strain GE5 / Orsay)).